Reading from the N-terminus, the 430-residue chain is Adenylosuccinate synthetase (430 aa).

GTP is bound by residues 12 to 18 (GDEGKGK) and 40 to 42 (GHT). The active-site Proton acceptor is Asp13. Positions 13 and 40 each coordinate Mg(2+). IMP-binding positions include 13-16 (DEGK), 38-41 (NAGH), Thr130, Arg144, Gln224, Thr239, and Arg303. The active-site Proton donor is the His41. 299–305 (VNTGRKR) is a binding site for substrate. Residues Arg305, 331–333 (KLD), and 413–415 (STS) each bind GTP.

It belongs to the adenylosuccinate synthetase family. Homodimer. Mg(2+) is required as a cofactor.

It is found in the cytoplasm. The enzyme catalyses IMP + L-aspartate + GTP = N(6)-(1,2-dicarboxyethyl)-AMP + GDP + phosphate + 2 H(+). It participates in purine metabolism; AMP biosynthesis via de novo pathway; AMP from IMP: step 1/2. In terms of biological role, plays an important role in the de novo pathway of purine nucleotide biosynthesis. Catalyzes the first committed step in the biosynthesis of AMP from IMP. In Nitrobacter winogradskyi (strain ATCC 25391 / DSM 10237 / CIP 104748 / NCIMB 11846 / Nb-255), this protein is Adenylosuccinate synthetase.